The primary structure comprises 70 residues: Gas vesicle protein A (70 aa).

The protein belongs to the gas vesicle GvpA family. The gas vesicle shell is 2 nm thick and consists of a single layer of this protein. It forms helical ribs nearly perpendicular to the long axis of the vesicle.

The protein resides in the gas vesicle shell. In terms of biological role, gas vesicles are hollow, gas filled proteinaceous nanostructures found in some microorganisms. During planktonic growth they allow positioning of the organism at a favorable depth for light or nutrient acquisition. GvpA forms the protein shell. In Bradyrhizobium sp. (strain ORS 278), this protein is Gas vesicle protein A.